The chain runs to 1233 residues: Mitogen-activated protein kinase kinase kinase kinase 4 (1233 aa).

An N-acetylalanine modification is found at alanine 2. Position 5 is a phosphoserine (serine 5). In terms of domain architecture, Protein kinase spans 25-289 (FELVEVVGNG…EQLLKHPFIR (265 aa)). ATP contacts are provided by residues 31-39 (VGNGTYGQV) and lysine 53. Aspartate 152 serves as the catalytic Proton acceptor. Disordered regions lie at residues 305 to 348 (IDRT…VPGE), 401 to 463 (QKEQ…VERE), and 489 to 805 (QAML…ETES). A compositionally biased stretch (acidic residues) spans 316–337 (DETEYEYSGSEEEEEEVPEQEG). Serine 323 and serine 325 each carry phosphoserine. Residues 521-537 (PEPKPHYDPADRAREVQ) are compositionally biased toward basic and acidic residues. At serine 543 the chain carries Phosphoserine. The span at 544 to 559 (LKNNVSPVSRSHSFSD) shows a compositional bias: polar residues. Residues serine 619, serine 621, serine 629, and serine 646 each carry the phosphoserine modification. Over residues 654–663 (LLWERVEKLV) the composition is skewed to basic and acidic residues. The span at 666-692 (PGSGSSSGSSNSGSQPGSHPGSQSGSG) shows a compositional bias: low complexity. Residues serine 691, serine 703, and serine 706 each carry the phosphoserine modification. Basic and acidic residues-rich tracts occupy residues 713–726 (SAAK…EVFR) and 741–756 (KELR…HKVT). Acidic residues predominate over residues 766–781 (GTTDEEEEDVEQEGAD). The span at 783–803 (STSGPEDTRAASSPNLSNGET) shows a compositional bias: polar residues. A phosphoserine mark is found at serine 785, serine 794, serine 795, serine 799, and serine 817. Position 822 is a phosphothreonine (threonine 822). 4 positions are modified to phosphoserine: serine 846, serine 849, serine 894, and serine 907. The tract at residues 852–1206 (PFIDPRLLQI…LKFLCGRNDK (355 aa)) is mediates interaction with RAP2A. The CNH domain maps to 920 to 1207 (NSEILCAALW…KFLCGRNDKV (288 aa)).

It belongs to the protein kinase superfamily. STE Ser/Thr protein kinase family. STE20 subfamily. In terms of assembly, interacts with the SH3 domain of the adapter proteins Nck. Interacts (via its CNH regulatory domain) with ATL1 (via the N-terminal region). Interacts with RAP2A (GTP-bound form preferentially). The cofactor is Mg(2+). Appears to be ubiquitous, expressed in all tissue types examined. Highest levels observed in heart and brain.

It localises to the cytoplasm. The enzyme catalyses L-seryl-[protein] + ATP = O-phospho-L-seryl-[protein] + ADP + H(+). The catalysed reaction is L-threonyl-[protein] + ATP = O-phospho-L-threonyl-[protein] + ADP + H(+). In terms of biological role, serine/threonine kinase that plays a role in the response to environmental stress and cytokines such as TNF-alpha. Appears to act upstream of the JUN N-terminal pathway. Activator of the Hippo signaling pathway which plays a pivotal role in organ size control and tumor suppression by restricting proliferation and promoting apoptosis. MAP4Ks act in parallel to and are partially redundant with STK3/MST2 and STK4/MST2 in the phosphorylation and activation of LATS1/2, and establish MAP4Ks as components of the expanded Hippo pathway. Phosphorylates SMAD1 on Thr-322. In Mus musculus (Mouse), this protein is Mitogen-activated protein kinase kinase kinase kinase 4 (Map4k4).